Here is a 346-residue protein sequence, read N- to C-terminus: Autoinducer 2 import system permease protein LsrC (346 aa).

9 consecutive transmembrane segments (helical) span residues 13-33 (LLAI…YLSV), 38-58 (MVFS…MVML), 71-91 (GMCA…PVAC), 92-112 (LATL…VAWL), 114-134 (IPAI…MLLW), 154-174 (VFLG…LMAW), 212-232 (LNGG…GFIP), 248-268 (VLGG…ILGA), and 283-303 (IPAW…LVFD).

This sequence belongs to the binding-protein-dependent transport system permease family. AraH/RbsC subfamily. The complex is composed of two ATP-binding proteins (LsrA), two transmembrane proteins (LsrC and LsrD) and a solute-binding protein (LsrB).

It localises to the cell inner membrane. Functionally, part of the ABC transporter complex LsrABCD involved in autoinducer 2 (AI-2) import. Probably responsible for the translocation of the substrate across the membrane. The chain is Autoinducer 2 import system permease protein LsrC (lsrC) from Salmonella paratyphi B (strain ATCC BAA-1250 / SPB7).